The following is a 556-amino-acid chain: RING finger protein 207 (556 aa).

The RING-type zinc finger occupies C25 to Q64. Residues T93–L145 form a B box-type; atypical zinc finger. Zn(2+)-binding residues include C98, C101, C127, and H132. 2 coiled-coil regions span residues T218–E273 and F385–K425. The interval F517 to S556 is disordered. Basic and acidic residues predominate over residues P524–G535.

As to quaternary structure, interacts with the core-glycosylated, but not the fully glycosylated form of KCNH2/HERG. Interacts with DNAJA1 and HSPA8. Interacts (via the C-terminus) with HSPA1A; this interaction additively increases KCNH2 expression.

Its subcellular location is the cytoplasm. Plays a role in cardiac repolarization possibly by stabilizing membrane expression of the potassium channel KCNH2/HERG, or by assisting its synthesis, folding or export from the endoplasmic reticulum, in a heat shock protein-dependent manner. This chain is RING finger protein 207 (RNF207), found in Bos taurus (Bovine).